The following is a 170-amino-acid chain: Protein-export protein SecB (170 aa).

It belongs to the SecB family. Homotetramer, a dimer of dimers. One homotetramer interacts with 1 SecA dimer.

It localises to the cytoplasm. Functionally, one of the proteins required for the normal export of preproteins out of the cell cytoplasm. It is a molecular chaperone that binds to a subset of precursor proteins, maintaining them in a translocation-competent state. It also specifically binds to its receptor SecA. The sequence is that of Protein-export protein SecB from Xanthomonas campestris pv. campestris (strain 8004).